Reading from the N-terminus, the 351-residue chain is Putative F-box protein At5g52610 (351 aa).

Residues 1-41 enclose the F-box domain; the sequence is MISEDLLVEILLRLPVKPLARCLCVCKLWATIIRSRYFINL.

This is Putative F-box protein At5g52610 from Arabidopsis thaliana (Mouse-ear cress).